The primary structure comprises 516 residues: ADP-ribosylation factor GTPase-activating protein 3 (516 aa).

Residues Leu-10–Arg-126 form the Arf-GAP domain. Residues Cys-25–Cys-48 form a C4-type zinc finger. Positions Ala-170–Gly-199 are disordered. Positions Ser-173–Gly-190 are enriched in polar residues. A Phosphoserine modification is found at Ser-231. Residues Asn-243–Ala-264 adopt a coiled-coil conformation. Phosphoserine is present on residues Ser-270, Ser-274, Ser-331, and Ser-370. The interval Thr-393–Ala-417 is disordered. Phosphoserine occurs at positions 428, 451, 453, 455, 457, and 458.

It is found in the cytoplasm. Its subcellular location is the golgi apparatus membrane. With respect to regulation, GAP activity stimulated by phosphatidylinositol 4,5-bisphosphate (PIP2). In terms of biological role, GTPase-activating protein (GAP) for ADP ribosylation factor 1 (ARF1). Hydrolysis of ARF1-bound GTP may lead to dissociation of coatomer from Golgi-derived membranes to allow fusion with target membranes. This Pongo abelii (Sumatran orangutan) protein is ADP-ribosylation factor GTPase-activating protein 3.